Reading from the N-terminus, the 283-residue chain is Elongation factor Ts (283 aa).

The involved in Mg(2+) ion dislocation from EF-Tu stretch occupies residues 80–83 (TDFV).

The protein belongs to the EF-Ts family.

It is found in the cytoplasm. Functionally, associates with the EF-Tu.GDP complex and induces the exchange of GDP to GTP. It remains bound to the aminoacyl-tRNA.EF-Tu.GTP complex up to the GTP hydrolysis stage on the ribosome. The chain is Elongation factor Ts from Actinobacillus pleuropneumoniae serotype 5b (strain L20).